The primary structure comprises 148 residues: Large ribosomal subunit protein uL15 (148 aa).

Residues 12–52 (ERKNRKRVGRGGGSGWGGTSGKGHKGQNARSGGGVPAWFEG) form a disordered region. Positions 21–32 (RGGGSGWGGTSG) are enriched in gly residues.

It belongs to the universal ribosomal protein uL15 family. As to quaternary structure, part of the 50S ribosomal subunit.

Functionally, binds to the 23S rRNA. In Maridesulfovibrio salexigens (strain ATCC 14822 / DSM 2638 / NCIMB 8403 / VKM B-1763) (Desulfovibrio salexigens), this protein is Large ribosomal subunit protein uL15.